We begin with the raw amino-acid sequence, 1512 residues long: Bifunctional glutamate/proline--tRNA ligase (1512 aa).

Residues 164 to 759 (GTKWDVSGNR…SSVLYSRVAV (596 aa)) form a glutamate--tRNA ligase region. The 'HIGH' region motif lies at 204-214 (PEASGYLHIGH). Residues 294-315 (TPAEQMKAEREQRTESKHRKNS) are disordered. The span at 299 to 308 (MKAEREQRTE) shows a compositional bias: basic and acidic residues. Lys300 bears the N6-acetyllysine; alternate mark. At Lys300 the chain carries N6-malonyllysine; alternate. Thr355 carries the post-translational modification Phosphothreonine. Lys417 is modified (N6-acetyllysine). The short motif at 432–436 (VLSKR) is the 'KMSKS' region element. Ser434 bears the Phosphoserine mark. 4 positions are modified to N6-acetyllysine: Lys498, Lys535, Lys542, and Lys637. Positions 709 to 736 (EMPTSGSKEKTKVEISKKETSSAPKERP) are enriched in basic and acidic residues. The interval 709–742 (EMPTSGSKEKTKVEISKKETSSAPKERPAPAVSS) is disordered. The region spanning 749–805 (DSSVLYSRVAVQGDVVRELKAKKAPKEDIDAAVKQLLTLKAEYKEKTGQEYKPGNPS) is the WHEP-TRS 1 domain. The tract at residues 760–956 (QGDVVRELKA…GIEYKPVSAT (197 aa)) is 3 X 57 AA approximate repeats. Lys788 carries the post-translational modification N6-acetyllysine. The disordered stretch occupies residues 795 to 819 (TGQEYKPGNPSAAAVQTVSTKSSSN). A compositionally biased stretch (polar residues) spans 808 to 819 (AVQTVSTKSSSN). A WHEP-TRS 2 domain is found at 822-878 (ESTSLYNKVAAQGEVVRKLKAEKAPKAKVTEAVECLLSLKAEYKEKTGKDYVPGQPP). Lys861 carries the post-translational modification N6-acetyllysine. 2 disordered regions span residues 869-898 (GKDY…GAEK) and 956-1011 (TGAE…PKKQ). Tyr872 is modified (phosphotyrosine). Positions 878–892 (PASQNSHSNPVSNAQ) are enriched in polar residues. At Ser885 the chain carries Phosphoserine. Residues 900-956 (EAKVLFDRVACQGEVVRKLKAEKASKDQVDSAVQELLQLKAQYKSLTGIEYKPVSAT) enclose the WHEP-TRS 3 domain. The span at 958 to 976 (AEDKDKKKKEKENKSEKQN) shows a compositional bias: basic and acidic residues. Gly residues predominate over residues 997 to 1006 (LSSGGAGEGQ). Ser998 carries the post-translational modification Phosphoserine. The residue at position 999 (Ser999) is a Phosphoserine; by RPS6KB1. The segment at 1007–1512 (GPKKQTRLGL…KFYTLFGRSY (506 aa)) is proline--tRNA ligase. L-proline contacts are provided by residues 1121–1123 (TSE) and Arg1152. Positions 1152, 1154, 1163, 1164, 1237, and 1240 each coordinate ATP. Position 1152 is an omega-N-methylarginine (Arg1152). Gln1237 provides a ligand contact to Mg(2+). An L-proline-binding site is contributed by His1242. Residues Thr1276 and Arg1278 each coordinate ATP. Position 1350 is a phosphoserine (Ser1350). Residues Cys1448, Cys1453, Cys1495, and Cys1497 each coordinate Zn(2+). N6-acetyllysine is present on Lys1503.

The protein in the N-terminal section; belongs to the class-I aminoacyl-tRNA synthetase family. Glutamate--tRNA ligase type 2 subfamily. In the C-terminal section; belongs to the class-II aminoacyl-tRNA synthetase family. As to quaternary structure, homodimer. Part of the aminoacyl-tRNA synthetase multienzyme complex, also know as multisynthetase complex, that is composed of the tRNA ligases for Arg (RARS1), Asp (DARS1), Gln (QARS1), Ile (IARS1), Leu (LARS1), Lys (KARS1), Met (MARS1) the bifunctional ligase for Glu and Pro (EPRS1) and the auxiliary subunits AIMP1/p43, AIMP2/p38 and EEF1E1/p18. Forms a linear complex that contains MARS1, EEF1E1, EPRS1 and AIMP2 that is at the core of the multisubunit complex. Interacts with TARS3. Interacts with DUS2L. Component of the GAIT complex which is composed of EPRS1, RPL13A and GAPDH. Interacts (phosphorylated at Ser-999) with SLC27A1; mediates the translocation of SLC27A1 from the cytoplasm to the plasma membrane thereby increasing the uptake of long-chain fatty acids. Phosphorylated at Ser-999 by RPS6KB1; triggers EPRS1 release from the aminoacyl-tRNA synthetase multienzyme complex. In monocytes, the IFN-gamma-induced phosphorylation at Ser-999 releases EPRS1 from the aminoacyl-tRNA synthetase multienzyme complex, allowing its association with the GAIT complex. Phosphorylation at Ser-999 is specifically required for the RPL13A-mediated interaction of the GAIT complex with eIF4G. Phosphorylation at Ser-999 by RPS6KB1, is also induced by insulin through activation of the mTORC1 signaling pathway and promotes the interaction of EPRS1 with SLC27A1.

Its subcellular location is the cytoplasm. The protein localises to the cytosol. It localises to the membrane. It carries out the reaction tRNA(Glu) + L-glutamate + ATP = L-glutamyl-tRNA(Glu) + AMP + diphosphate. It catalyses the reaction tRNA(Pro) + L-proline + ATP = L-prolyl-tRNA(Pro) + AMP + diphosphate. Functionally, multifunctional protein which primarily functions within the aminoacyl-tRNA synthetase multienzyme complex, also known as multisynthetase complex. Within the complex it catalyzes the attachment of both L-glutamate and L-proline to their cognate tRNAs in a two-step reaction where the amino acid is first activated by ATP to form a covalent intermediate with AMP. Subsequently, the activated amino acid is transferred to the acceptor end of the cognate tRNA to form L-glutamyl-tRNA(Glu) and L-prolyl-tRNA(Pro). Upon interferon-gamma stimulation, EPRS1 undergoes phosphorylation, causing its dissociation from the aminoacyl-tRNA synthetase multienzyme complex. It is recruited to form the GAIT complex, which binds to stem loop-containing GAIT elements found in the 3'-UTR of various inflammatory mRNAs, such as ceruloplasmin. The GAIT complex inhibits the translation of these mRNAs, allowing interferon-gamma to redirect the function of EPRS1 from protein synthesis to translation inhibition in specific cell contexts. Furthermore, it can function as a downstream effector in the mTORC1 signaling pathway, by promoting the translocation of SLC27A1 from the cytoplasm to the plasma membrane where it mediates the uptake of long-chain fatty acid by adipocytes. Thereby, EPRS1 also plays a role in fat metabolism and more indirectly influences lifespan. The chain is Bifunctional glutamate/proline--tRNA ligase from Mus musculus (Mouse).